A 146-amino-acid polypeptide reads, in one-letter code: MHVLLLNGPNLNLLGQREPGIYGHSSLADIEAALTREAEQESVQLDCFQSNFEGALVDRIHQAMGRCDGILINAGAYTHTSIAIRDALAGVAIPYVEVHLSNTHARENFRHHSFLAERAVGVICGFGPASYSFALNGLLSHLRRNA.

Residue Y22 is the Proton acceptor of the active site. Residues N73, H79, and D86 each contribute to the substrate site. H99 serves as the catalytic Proton donor. Residues 100-101 and R110 each bind substrate; that span reads LS.

The protein belongs to the type-II 3-dehydroquinase family. Homododecamer.

It catalyses the reaction 3-dehydroquinate = 3-dehydroshikimate + H2O. It participates in metabolic intermediate biosynthesis; chorismate biosynthesis; chorismate from D-erythrose 4-phosphate and phosphoenolpyruvate: step 3/7. Its function is as follows. Catalyzes a trans-dehydration via an enolate intermediate. In Synechococcus sp. (strain CC9605), this protein is 3-dehydroquinate dehydratase.